Here is a 492-residue protein sequence, read N- to C-terminus: FAD-linked oxidoreductase pgmH (492 aa).

Residues 54 to 224 (SIRLATLVVY…TEFKYRVHKQ (171 aa)) enclose the FAD-binding PCMH-type domain.

This sequence belongs to the oxygen-dependent FAD-linked oxidoreductase family. The cofactor is FAD.

It functions in the pathway pigment biosynthesis. It participates in secondary metabolite biosynthesis. Its function is as follows. FAD-linked oxidoreductase; part of the gene cluster that mediates the biosynthesis of pleosporalin A, ascomycone A, as well as a third cryptic naphthoquinone derived pigment, all responsible for the coloration of conidia. Essential for the production of pleosporalin A, but not the 2 other final products. The pathway begins with the biosynthesis of the cyclized heptaketide 3-acetonyl-1,6,8-trihydroxy-2-naphthaldehyde by the NR-PKS pgmA. The C-6 hydroxyl group is further methylated by the O-methyltransferase pgmB to yield fusarubinaldehyde which is in turn oxidized by the cytochrome P450 monooxygenase pgmC at C-9. The C-1 hydroxyl group is then methylated spontaneously. Although pgmE, pgmD and pgmH are essential for the production of pleosporalin A, it is not the case for the 2 other final products and it remains difficult to assign a specific function to each enzyme. PgmF and pgmG seem not to be involved in pigment biosynthesis although they were regulated by the cluster-specific transcription factor pgmR. The polypeptide is FAD-linked oxidoreductase pgmH (Aspergillus terreus).